A 472-amino-acid polypeptide reads, in one-letter code: uncharacterized protein (472 aa).

This sequence belongs to the IIV-6 198R family.

This is an uncharacterized protein from Acheta domesticus (House cricket).